Reading from the N-terminus, the 508-residue chain is Probable cytosol aminopeptidase (508 aa).

Residues K274 and D279 each coordinate Mn(2+). The active site involves K286. 3 residues coordinate Mn(2+): D297, D356, and E358. The active site involves R360.

The protein belongs to the peptidase M17 family. It depends on Mn(2+) as a cofactor.

The protein resides in the cytoplasm. The catalysed reaction is Release of an N-terminal amino acid, Xaa-|-Yaa-, in which Xaa is preferably Leu, but may be other amino acids including Pro although not Arg or Lys, and Yaa may be Pro. Amino acid amides and methyl esters are also readily hydrolyzed, but rates on arylamides are exceedingly low.. The enzyme catalyses Release of an N-terminal amino acid, preferentially leucine, but not glutamic or aspartic acids.. Presumably involved in the processing and regular turnover of intracellular proteins. Catalyzes the removal of unsubstituted N-terminal amino acids from various peptides. This chain is Probable cytosol aminopeptidase, found in Paraburkholderia phytofirmans (strain DSM 17436 / LMG 22146 / PsJN) (Burkholderia phytofirmans).